Here is a 67-residue protein sequence, read N- to C-terminus: Large ribosomal subunit protein uL29 (67 aa).

This sequence belongs to the universal ribosomal protein uL29 family.

This is Large ribosomal subunit protein uL29 from Desulfitobacterium hafniense (strain DSM 10664 / DCB-2).